Reading from the N-terminus, the 229-residue chain is Large ribosomal subunit protein bL19cy (229 aa).

Residues 1 to 70 constitute a chloroplast transit peptide; it reads MATSSHLLPQ…DSKKRKEFIA (70 aa).

The protein belongs to the bacterial ribosomal protein bL19 family. As to quaternary structure, part of the 50S ribosomal subunit.

Its subcellular location is the plastid. It localises to the chloroplast. Located at the 30S-50S ribosomal subunit interface and binds directly to 23S ribosomal RNA. This Arabidopsis thaliana (Mouse-ear cress) protein is Large ribosomal subunit protein bL19cy.